The chain runs to 258 residues: Regulatory protein RecX (258 aa).

This sequence belongs to the RecX family.

It is found in the cytoplasm. Its function is as follows. Modulates RecA activity. This is Regulatory protein RecX from Streptococcus pyogenes serotype M5 (strain Manfredo).